A 60-amino-acid chain; its full sequence is Large ribosomal subunit protein bL32 (60 aa).

A disordered region spans residues 1–21 (MAVPRNRHSNARKNIRRSHDA).

This sequence belongs to the bacterial ribosomal protein bL32 family.

The chain is Large ribosomal subunit protein bL32 from Chlamydia felis (strain Fe/C-56) (Chlamydophila felis).